The sequence spans 408 residues: Glyceraldehyde-3-phosphate dehydrogenase, testis-specific (408 aa).

A testis-specific N-terminal extension region spans residues 1 to 73 (MSKRDIVLTN…TPPPKMVSVA (73 aa)). The disordered stretch occupies residues 19 to 68 (QPCPVTRAPPPPEPKAEVEPQPQPEPTPVREEIKPPPPPLPPHPATPPPK). Positions 53-68 (PPPPPLPPHPATPPPK) are enriched in pro residues. NAD(+) is bound by residues 85 to 86 (RI), aspartate 106, lysine 151, tyrosine 173, and serine 193. D-glyceraldehyde 3-phosphate contacts are provided by residues 223–225 (SCT), threonine 254, 283–284 (TG), and arginine 306. Cysteine 224 serves as the catalytic Nucleophile. Asparagine 388 lines the NAD(+) pocket.

Belongs to the glyceraldehyde-3-phosphate dehydrogenase family. Homotetramer. Interacts with ARRB2; the interaction is detected in the nucleus upon OR1D2 stimulation. Testis specific.

It is found in the cytoplasm. The enzyme catalyses D-glyceraldehyde 3-phosphate + phosphate + NAD(+) = (2R)-3-phospho-glyceroyl phosphate + NADH + H(+). It participates in carbohydrate degradation; glycolysis; pyruvate from D-glyceraldehyde 3-phosphate: step 1/5. Its function is as follows. May play an important role in regulating the switch between different pathways for energy production during spermiogenesis and in the spermatozoon. Required for sperm motility and male fertility. The protein is Glyceraldehyde-3-phosphate dehydrogenase, testis-specific (GAPDHS) of Homo sapiens (Human).